The following is a 137-amino-acid chain: Holo-[acyl-carrier-protein] synthase (137 aa).

Mg(2+) is bound by residues Asp-8 and Glu-57.

The protein belongs to the P-Pant transferase superfamily. AcpS family. It depends on Mg(2+) as a cofactor.

The protein resides in the cytoplasm. It catalyses the reaction apo-[ACP] + CoA = holo-[ACP] + adenosine 3',5'-bisphosphate + H(+). Its function is as follows. Transfers the 4'-phosphopantetheine moiety from coenzyme A to a Ser of acyl-carrier-protein. The protein is Holo-[acyl-carrier-protein] synthase of Cereibacter sphaeroides (strain ATCC 17029 / ATH 2.4.9) (Rhodobacter sphaeroides).